The chain runs to 222 residues: Pro-opiomelanocortin-1 (222 aa).

A signal peptide spans 1–28 (MVRGERMLCPAWLLALAVLCAAGSEVRA). Positions 29–105 (QCMEDARCRD…DPESSPQHEH (77 aa)) are excised as a propeptide.

The protein belongs to the POMC family. Post-translationally, specific enzymatic cleavages at paired basic residues yield the different active peptides.

The protein resides in the secreted. Its function is as follows. Stimulates the adrenal glands to release cortisol. In terms of biological role, anorexigenic peptide. Increases the pigmentation of skin by increasing melanin production in melanocytes. Increases the pigmentation of skin by increasing melanin production in melanocytes. Functionally, endogenous orexigenic opiate. Its function is as follows. Endogenous opiate. The chain is Pro-opiomelanocortin-1 (pomca) from Cyprinus carpio (Common carp).